The sequence spans 621 residues: Chaperone protein HscA homolog (621 aa).

The protein belongs to the heat shock protein 70 family.

In terms of biological role, chaperone involved in the maturation of iron-sulfur cluster-containing proteins. Has a low intrinsic ATPase activity which is markedly stimulated by HscB. In Cupriavidus necator (strain ATCC 17699 / DSM 428 / KCTC 22496 / NCIMB 10442 / H16 / Stanier 337) (Ralstonia eutropha), this protein is Chaperone protein HscA homolog.